An 855-amino-acid polypeptide reads, in one-letter code: Suppressor of tumorigenicity 14 protein (855 aa).

The segment at 1 to 20 (MGSDRARKGGGGPKDFGAGL) is disordered. The Cytoplasmic segment spans residues 1–55 (MGSDRARKGGGGPKDFGAGLKYNSRHEKVNGLEEGVEFLPVNNVKKVEKHGPGRW). A helical; Signal-anchor for type II membrane protein membrane pass occupies residues 56–76 (VVLAAVLIGLLLVLLGIGFLV). At 77 to 855 (WHLQYRDVRV…RDWIKENTGV (779 aa)) the chain is on the extracellular side. The SEA domain occupies 86-203 (VQKVFNGYMR…TSVVAFPTDS (118 aa)). Asn109 carries N-linked (GlcNAc...) asparagine glycosylation. Cys214 and Cys244 are joined by a disulfide. CUB domains follow at residues 214–334 (CSFG…FFQL) and 340–447 (CGGR…YLSY). Asn302 carries an N-linked (GlcNAc...) asparagine glycan. Cystine bridges form between Cys340-Cys366, Cys397-Cys410, Cys453-Cys464, Cys459-Cys477, Cys471-Cys486, Cys488-Cys501, Cys496-Cys514, Cys508-Cys523, Cys525-Cys537, Cys532-Cys550, Cys544-Cys559, Cys567-Cys579, Cys574-Cys593, Cys587-Cys602, and Cys641-Cys657. LDL-receptor class A domains lie at 452 to 487 (PCPG…LNCS), 487 to 524 (SCDA…QGCS), 524 to 560 (SCPA…ASCP), and 566 to 603 (TCTK…KDCD). Asn485 carries an N-linked (GlcNAc...) asparagine glycan. One can recognise a Peptidase S1 domain in the interval 615-854 (VVGGTDADEG…FRDWIKENTG (240 aa)). Residues His656 and Asp711 each act as charge relay system in the active site. Asn772 carries an N-linked (GlcNAc...) asparagine glycan. Cystine bridges form between Cys776/Cys790 and Cys801/Cys830. The Charge relay system role is filled by Ser805.

Belongs to the peptidase S1 family. As to quaternary structure, interacts with CDCP1. May interact with TMEFF1. Interacts with iripin-3, a serine protease inhibitor from Ixodes ricinus saliva. Interacts with iripin-1, a serine protease inhibitor from Ixodes ricinus saliva.

Its subcellular location is the membrane. The catalysed reaction is Cleaves various synthetic substrates with Arg or Lys at the P1 position and prefers small side-chain amino acids, such as Ala and Gly, at the P2 position.. Exhibits trypsin-like activity as defined by cleavage of synthetic substrates with Arg or Lys as the P1 site. Involved in the terminal differentiation of keratinocytes through prostasin (PRSS8) activation and filaggrin (FLG) processing. Proteolytically cleaves and therefore activates TMPRSS13. This is Suppressor of tumorigenicity 14 protein (ST14) from Homo sapiens (Human).